The following is a 680-amino-acid chain: DNA-directed RNA polymerase subunit beta' (680 aa).

The Zn(2+) site is built by Cys69, Cys71, Cys87, and Cys90. The Mg(2+) site is built by Asp489, Asp491, and Asp493.

The protein belongs to the RNA polymerase beta' chain family. RpoC1 subfamily. In plastids the minimal PEP RNA polymerase catalytic core is composed of four subunits: alpha, beta, beta', and beta''. When a (nuclear-encoded) sigma factor is associated with the core the holoenzyme is formed, which can initiate transcription. Mg(2+) is required as a cofactor. Requires Zn(2+) as cofactor.

The protein resides in the plastid. The protein localises to the chloroplast. It carries out the reaction RNA(n) + a ribonucleoside 5'-triphosphate = RNA(n+1) + diphosphate. Functionally, DNA-dependent RNA polymerase catalyzes the transcription of DNA into RNA using the four ribonucleoside triphosphates as substrates. The protein is DNA-directed RNA polymerase subunit beta' of Ranunculus macranthus (Large buttercup).